Here is a 552-residue protein sequence, read N- to C-terminus: Putative transport protein Spro_0050 (552 aa).

Helical transmembrane passes span isoleucine 4 to tryptophan 24, isoleucine 26 to phenylalanine 46, phenylalanine 65 to serine 85, phenylalanine 96 to alanine 116, valine 117 to glycine 137, and methionine 158 to isoleucine 178. RCK C-terminal domains are found at residues alanine 192–glutamate 276 and aspartate 279–asparagine 361. 6 helical membrane passes run methionine 371 to isoleucine 391, glycine 393 to leucine 413, isoleucine 439 to isoleucine 459, leucine 464 to leucine 484, tyrosine 493 to alanine 513, and valine 530 to tryptophan 550.

This sequence belongs to the AAE transporter (TC 2.A.81) family. YidE subfamily.

It is found in the cell membrane. The polypeptide is Putative transport protein Spro_0050 (Serratia proteamaculans (strain 568)).